A 1779-amino-acid polypeptide reads, in one-letter code: 5-methyl-1-naphthoate synthase (1779 aa).

One can recognise a Ketosynthase family 3 (KS3) domain in the interval 10–433; it reads VEPLAVIGMS…GSIAHAVLQQ (424 aa). Active-site for beta-ketoacyl synthase activity residues include Cys181, His316, and His356. Positions 902–1027 are N-terminal hotdog fold; it reads HTLIGARTTV…ATVVHEPEVG (126 aa). The PKS/mFAS DH domain maps to 902–1180; that stretch reads HTLIGARTTV…YVKVQDIGSG (279 aa). The C-terminal hotdog fold stretch occupies residues 1042 to 1180; it reads PVSWTWAKVD…YVKVQDIGSG (139 aa). One can recognise a Carrier domain in the interval 1664–1742; sequence GELPELVLKV…ALAEFLAAEV (79 aa). Ser1702 carries the O-(pantetheine 4'-phosphoryl)serine modification. Positions 1746–1771 are disordered; it reads TADAEETDPVAGLPAPQQGSGTAEQL.

The enzyme catalyses 5 malonyl-CoA + acetyl-CoA + 3 NADPH + 7 H(+) = 5-methyl-1-naphthoate + 5 CO2 + 3 NADP(+) + 6 CoA + 4 H2O. It participates in antibiotic biosynthesis. Polyketide synthase that catalyzes the biosynthesis of the bicyclic aromatic compound 5-methyl-1-naphthoate in the biosynthesis of the antitumor antibiotic azinomycin B. This chain is 5-methyl-1-naphthoate synthase, found in Streptomyces sahachiroi.